The following is a 343-amino-acid chain: Cytosolic Fe-S cluster assembly factor CFD1 (343 aa).

15 to 22 is a binding site for ATP; the sequence is GKGGVGKS. Composition is skewed to polar residues over residues 80–91 and 99–110; these read PSSDGLNGSQRA and ESSSSTVETAPQ. The interval 80 to 110 is disordered; it reads PSSDGLNGSQRANKPDDSNESSSSTVETAPQ. [4Fe-4S] cluster is bound by residues Cys-241 and Cys-244.

The protein belongs to the Mrp/NBP35 ATP-binding proteins family. NUBP2/CFD1 subfamily. As to quaternary structure, heterotetramer of 2 NBP35 and 2 CFD1 chains. [4Fe-4S] cluster is required as a cofactor.

The protein resides in the cytoplasm. Component of the cytosolic iron-sulfur (Fe/S) protein assembly (CIA) machinery. Required for maturation of extramitochondrial Fe-S proteins. The NBP35-CFD1 heterotetramer forms a Fe-S scaffold complex, mediating the de novo assembly of an Fe-S cluster and its transfer to target apoproteins. This chain is Cytosolic Fe-S cluster assembly factor CFD1, found in Coccidioides immitis (strain RS) (Valley fever fungus).